Here is a 157-residue protein sequence, read N- to C-terminus: Small ribosomal subunit protein uS7 (157 aa).

The protein belongs to the universal ribosomal protein uS7 family. In terms of assembly, part of the 30S ribosomal subunit. Contacts proteins S9 and S11.

Its function is as follows. One of the primary rRNA binding proteins, it binds directly to 16S rRNA where it nucleates assembly of the head domain of the 30S subunit. Is located at the subunit interface close to the decoding center, probably blocks exit of the E-site tRNA. The polypeptide is Small ribosomal subunit protein uS7 (Francisella philomiragia subsp. philomiragia (strain ATCC 25017 / CCUG 19701 / FSC 153 / O#319-036)).